Consider the following 96-residue polypeptide: uncharacterized protein (96 aa).

Residues 1 to 21 (MLASVLILGAIAVGSAIPTIA) form the signal peptide.

This is an uncharacterized protein from Archaeoglobus fulgidus (strain ATCC 49558 / DSM 4304 / JCM 9628 / NBRC 100126 / VC-16).